The sequence spans 512 residues: Tyrosine-protein kinase Lyn (512 aa).

The segment at 1–50 (MGCIKSKRKDNLNDDGVDMKTQPVRNTDRTIYVRDPTSNKQQRPVPESQL) is disordered. G2 carries N-myristoyl glycine lipidation. Residue C3 is the site of S-palmitoyl cysteine attachment. An SH3 domain is found at 63–123 (EQGDIVVALY…PSNYVAKVNT (61 aa)). The SH2 domain maps to 129–226 (WFFKDITRKD…GLCRRLEKAC (98 aa)). The residue at position 193 (Y193) is a Phosphotyrosine. S228 carries the phosphoserine modification. Residues 247–501 (IKLVKKLGAG…YLQSVLDDFY (255 aa)) form the Protein kinase domain. ATP is bound by residues 253 to 261 (LGAGQFGEV) and K275. 2 positions are modified to phosphotyrosine: Y306 and Y316. D367 acts as the Proton acceptor in catalysis. Y397 carries the post-translational modification Phosphotyrosine; by autocatalysis. A phosphotyrosine mark is found at Y460 and Y473. Phosphotyrosine; by autocatalysis, CSK and MATK is present on Y508.

It belongs to the protein kinase superfamily. Tyr protein kinase family. SRC subfamily. As to quaternary structure, interacts with TEC. Interacts (via SH2 domain) with FLT3 (tyrosine phosphorylated). Interacts with LIME1 and with CD79A upon activation of the B-cell antigen receptor. Interacts with the B-cell receptor complex. Interacts with phosphorylated THEMIS2. Interacts with EPOR. Interacts with MS4A2/FCER1B. Interaction (via the SH2 and SH3 domains) with MUC1 is stimulated by IL7 and the subsequent phosphorylation increases the binding between MUC1 and CTNNB1/beta-catenin. Interacts with ADAM15. Interacts with NDFIP2 and more weakly with NDFIP1. Interacts with FASLG. Interacts with KIT. Interacts with HCLS1. Interacts with FCGR2B. Interacts with FCGR1A; the interaction may be indirect. Interacts with CD19, CD22, CD79A and CD79B. Interacts (via SH3 domain) with CBLC, PPP1R15A and PDE4A. Interacts with TGFB1I1. Interacts (via SH3 domain) with PIK3R1, the regulatory subunit of phosphatidylinositol 3-kinase; this interaction enhances phosphatidylinositol 3-kinase activity. Interacts with CSF2RB, the common subunit of the IL3, IL5 and CSF2 receptors. Interacts with PAG1; identified in a complex with PAG1 and STAT3. Interacts with ABL1. Interacts with PTPN6/SHP-1. Interacts (via SH3 domain) with SCIMP (via proline-rich region). This interaction facilitates the phosphorylation of SCIMP 'Tyr-96', which enhances binding of SCIMP to TLR4, and consequently the phosphorylation of TLR4 in response to stimulation by lipopolysaccharide in macrophages. Interacts with LPXN (via LD motif 3) and the interaction is induced upon B-cell antigen receptor (BCR) activation. Interacts (via SH3-domain) with ANKRD54 (via ankyrin repeat region) in an activation-independent status of LYN. Forms a multiprotein complex with ANKRD54 and HCLS1. Interacts (via SH2 and SH3 domains) with UNC119; leading to LYN activation. Interacts with CD36. Interacts with LYN. Interacts with SKAP1 and FYB1; this interaction promotes the phosphorylation of CLNK. Interacts with BCAR1/CAS and NEDD9/HEF1. Ubiquitinated. Ubiquitination is SH3-dependent. In terms of processing, autophosphorylated. Phosphorylated on tyrosine residues in response to KIT signaling. Phosphorylation at Tyr-397 is required for optimal activity. Phosphorylation at Tyr-508 inhibits kinase activity. Phosphorylated at Tyr-508 by CSK. Dephosphorylated by PTPRC/CD45. Becomes rapidly phosphorylated upon activation of the B-cell receptor and the immunoglobulin receptor FCGR1A. Phosphorylated in response to integrin ITGB1 in B-cells. Detected in spleen (at protein level). Expressed predominantly in B-lymphoid and myeloid cells.

It localises to the cell membrane. Its subcellular location is the nucleus. It is found in the cytoplasm. The protein localises to the perinuclear region. The protein resides in the golgi apparatus. It localises to the membrane. The enzyme catalyses L-tyrosyl-[protein] + ATP = O-phospho-L-tyrosyl-[protein] + ADP + H(+). With respect to regulation, subject to autoinhibition, mediated by intramolecular interactions between the SH2 domain and the C-terminal phosphotyrosine. Phosphorylation at Tyr-397 is required for optimal activity. Phosphorylated by CSK at Tyr-508; phosphorylation at Tyr-508 inhibits kinase activity. Kinase activity is modulated by dephosphorylation by PTPRC/CD45. In terms of biological role, non-receptor tyrosine-protein kinase that transmits signals from cell surface receptors and plays an important role in the regulation of innate and adaptive immune responses, hematopoiesis, responses to growth factors and cytokines, integrin signaling, but also responses to DNA damage and genotoxic agents. Functions primarily as negative regulator, but can also function as activator, depending on the context. Required for the initiation of the B-cell response, but also for its down-regulation and termination. Plays an important role in the regulation of B-cell differentiation, proliferation, survival and apoptosis, and is important for immune self-tolerance. Acts downstream of several immune receptors, including the B-cell receptor, CD79A, CD79B, CD5, CD19, CD22, FCER1, FCGR2, FCGR1A, TLR2 and TLR4. Plays a role in the inflammatory response to bacterial lipopolysaccharide. Mediates the responses to cytokines and growth factors in hematopoietic progenitors, platelets, erythrocytes, and in mature myeloid cells, such as dendritic cells, neutrophils and eosinophils. Acts downstream of EPOR, KIT, MPL, the chemokine receptor CXCR4, as well as the receptors for IL3, IL5 and CSF2. Plays an important role in integrin signaling. Regulates cell proliferation, survival, differentiation, migration, adhesion, degranulation, and cytokine release. Involved in the regulation of endothelial activation, neutrophil adhesion and transendothelial migration. Down-regulates signaling pathways by phosphorylation of immunoreceptor tyrosine-based inhibitory motifs (ITIM), that then serve as binding sites for phosphatases, such as PTPN6/SHP-1, PTPN11/SHP-2 and INPP5D/SHIP-1, that modulate signaling by dephosphorylation of kinases and their substrates. Phosphorylates LIME1 in response to CD22 activation. Phosphorylates BTK, CBL, CD5, CD19, CD72, CD79A, CD79B, CSF2RB, DOK1, HCLS1, LILRB3/PIR-B, MS4A2/FCER1B, SYK and TEC. Promotes phosphorylation of SIRPA, PTPN6/SHP-1, PTPN11/SHP-2 and INPP5D/SHIP-1. Required for rapid phosphorylation of FER in response to FCER1 activation. Mediates KIT phosphorylation. Acts as an effector of EPOR (erythropoietin receptor) in controlling KIT expression and may play a role in erythroid differentiation during the switch between proliferation and maturation. Depending on the context, activates or inhibits several signaling cascades. Regulates phosphatidylinositol 3-kinase activity and AKT1 activation. Regulates activation of the MAP kinase signaling cascade, including activation of MAP2K1/MEK1, MAPK1/ERK2, MAPK3/ERK1, MAPK8/JNK1 and MAPK9/JNK2. Mediates activation of STAT5A and/or STAT5B. Phosphorylates LPXN on 'Tyr-72'. Kinase activity facilitates TLR4-TLR6 heterodimerization and signal initiation. Phosphorylates SCIMP on 'Tyr-96'; this enhances binding of SCIMP to TLR4, promoting the phosphorylation of TLR4, and a selective cytokine response to lipopolysaccharide in macrophages. Phosphorylates CLNK. Phosphorylates BCAR1/CAS and NEDD9/HEF1. The sequence is that of Tyrosine-protein kinase Lyn (Lyn) from Rattus norvegicus (Rat).